The sequence spans 672 residues: MPDHARMPRNLSSNKIAKTIAGEDLDEEEVLEMDAGQSAREEGRFVFECAWEVANKVGGIYTVLRSKAQISTEELGDQYCMFGPMKDGKWRLEVDPIEPENRTIRAAMKRFQADGFRCMYGRWLIEGYPKVILFDLGSGAVKMNEWKHELFEQCKIGIPHEDIESNDAVILGFMVALFLKHFRESVTSYTPLVVAHFHEWQAGVGLLMTRLWKLDIATVYTTHATLLGRHLCAGGADLYNNLDSFDLDAEAGKRKIYHQYCLERAACQTAHIFTTVSEITGLEAEHFLCRKPDVLTPNGLNVVKFAALHEFQNLHAQNKEKINQFIRGHFHGHLDFDLDKTLYFFTAGRYEFSNKGGDMFIESLARLNHYLKTTSDPRHMGVTVVAFLIYPAPANSFNVESLKGQAVTKQLKEAVDRIKEKVGQRIFDICLQGHLPEPEELMSPADNILLKRCIMSLHNSSLPPICTHNMIRADDPVLESLRRTSLFNKPEDRVKVVFHPEFLSSVSPLIGLDYEDFVRGCHLGVFPSYYEPWGYTPAECTVMGIPSVSTNLSGFGCFMQEHVEDHEQKGIYVIDRRHKAAEESVQELAQVMYDFCGQSRRQRIILRNSNEGLSALLDWQNLGVFYRDCRRLALERLHPDVDKIMRDNEGKVPSAATSRRPSIHSSDGEDDE.

Lys-56 provides a ligand contact to UDP-alpha-D-glucose. Residues 645-672 form a disordered region; the sequence is MRDNEGKVPSAATSRRPSIHSSDGEDDE. Polar residues predominate over residues 655–665; it reads AATSRRPSIHS.

It belongs to the glycosyltransferase 3 family. Forms a hetero-octamer with each protomer of the gsy-1 homotetramer bound to one molecule of gyg-1. The N-terminus is involved in interprotomer contacts with gyg-1. The interaction with gyg-1 is required for glycogen production but is not required for gsy-1 intrinsic activity.

It catalyses the reaction [(1-&gt;4)-alpha-D-glucosyl](n) + UDP-alpha-D-glucose = [(1-&gt;4)-alpha-D-glucosyl](n+1) + UDP + H(+). The protein operates within glycan biosynthesis; glycogen biosynthesis. Functionally, transfers the glycosyl residue from UDP-Glc to the non-reducing end of alpha-1,4-glucan. The chain is Glycogen [starch] synthase from Caenorhabditis elegans.